A 149-amino-acid polypeptide reads, in one-letter code: Down syndrome critical region protein 9 (149 aa).

A disordered region spans residues 1–41; sequence MGRICPVNSRARRLRARPGRPSGDSLPYHQLQGGAPRLWSP.

This is Down syndrome critical region protein 9 (DSCR9) from Pan troglodytes (Chimpanzee).